The chain runs to 444 residues: Methylenetetrahydrofolate--tRNA-(uracil-5-)-methyltransferase TrmFO (444 aa).

9 to 14 is an FAD binding site; that stretch reads GAGMAG.

It belongs to the MnmG family. TrmFO subfamily. The cofactor is FAD.

The protein resides in the cytoplasm. The catalysed reaction is uridine(54) in tRNA + (6R)-5,10-methylene-5,6,7,8-tetrahydrofolate + NADH + H(+) = 5-methyluridine(54) in tRNA + (6S)-5,6,7,8-tetrahydrofolate + NAD(+). It catalyses the reaction uridine(54) in tRNA + (6R)-5,10-methylene-5,6,7,8-tetrahydrofolate + NADPH + H(+) = 5-methyluridine(54) in tRNA + (6S)-5,6,7,8-tetrahydrofolate + NADP(+). Its function is as follows. Catalyzes the folate-dependent formation of 5-methyl-uridine at position 54 (M-5-U54) in all tRNAs. The protein is Methylenetetrahydrofolate--tRNA-(uracil-5-)-methyltransferase TrmFO of Cereibacter sphaeroides (strain ATCC 17023 / DSM 158 / JCM 6121 / CCUG 31486 / LMG 2827 / NBRC 12203 / NCIMB 8253 / ATH 2.4.1.) (Rhodobacter sphaeroides).